The following is a 145-amino-acid chain: Large ribosomal subunit protein uL15 (145 aa).

Residues 1–13 (MIRSKRKINKLRG) show a composition bias toward basic residues. The segment at 1–44 (MIRSKRKINKLRGSRSNGGGCTKKRRGAGNKGGRGNAGASKQHW) is disordered.

The protein belongs to the universal ribosomal protein uL15 family. In terms of assembly, part of the 50S ribosomal subunit.

Functionally, binds to the 23S rRNA. The protein is Large ribosomal subunit protein uL15 of Methanobrevibacter smithii (strain ATCC 35061 / DSM 861 / OCM 144 / PS).